The following is a 225-amino-acid chain: MISWINGDLVDLWQTNQKFFVLINCQGLGYEIQILESFFLKLRKNQISTKNITLWVKHIKKEDSDLLFGFTSNEQKNFFIEILSIRGVGSQIGIGILNKFSISEVINAIKTQDKKLICSVPGIGQKMSERLILELKSKFKSEILSEEEKSKGELEIKDPEINKMIEDLQLTLQSLSYKNKEINNILPIIIKEIDLLGKKENNLSFEKLLKLAMRYLDEDSSNIAR.

A domain I region spans residues 1-71 (MISWINGDLV…EDSDLLFGFT (71 aa)). The domain II stretch occupies residues 72–150 (SNEQKNFFIE…SEILSEEEKS (79 aa)). The tract at residues 151–161 (KGELEIKDPEI) is flexible linker. Residues 161 to 225 (INKMIEDLQL…LDEDSSNIAR (65 aa)) are domain III.

It belongs to the RuvA family. As to quaternary structure, homotetramer. Forms an RuvA(8)-RuvB(12)-Holliday junction (HJ) complex. HJ DNA is sandwiched between 2 RuvA tetramers; dsDNA enters through RuvA and exits via RuvB. An RuvB hexamer assembles on each DNA strand where it exits the tetramer. Each RuvB hexamer is contacted by two RuvA subunits (via domain III) on 2 adjacent RuvB subunits; this complex drives branch migration. In the full resolvosome a probable DNA-RuvA(4)-RuvB(12)-RuvC(2) complex forms which resolves the HJ.

It localises to the cytoplasm. Functionally, the RuvA-RuvB-RuvC complex processes Holliday junction (HJ) DNA during genetic recombination and DNA repair, while the RuvA-RuvB complex plays an important role in the rescue of blocked DNA replication forks via replication fork reversal (RFR). RuvA specifically binds to HJ cruciform DNA, conferring on it an open structure. The RuvB hexamer acts as an ATP-dependent pump, pulling dsDNA into and through the RuvAB complex. HJ branch migration allows RuvC to scan DNA until it finds its consensus sequence, where it cleaves and resolves the cruciform DNA. This is Holliday junction branch migration complex subunit RuvA from Prochlorococcus marinus (strain MIT 9301).